Consider the following 851-residue polypeptide: Protein FAM13B (851 aa).

Residues 23–212 form the Rho-GAP domain; the sequence is IPLDELQQGG…GLLENYYEFF (190 aa). The segment covering 556-565 has biased composition (basic and acidic residues); it reads IKDAKHKNSD. Residues 556 to 611 form a disordered region; the sequence is IKDAKHKNSDGEFAPQTRPRSNTLPKSFGSSLDHEDGESEGEPRVIQKEKTPSKEA. Residues 573–585 show a composition bias toward polar residues; sequence RPRSNTLPKSFGS. Over residues 596 to 611 the composition is skewed to basic and acidic residues; it reads GEPRVIQKEKTPSKEA.

Belongs to the FAM13 family.

In Mus musculus (Mouse), this protein is Protein FAM13B (Fam13b).